We begin with the raw amino-acid sequence, 401 residues long: MNVLRMMDVPLKGKRVLIREDLNVPMNDAGAITDDTRIRASLPTIRAALASGARVMLMSHLGRPKEGVFDEKASLAPVAAHLSQLLGRDVPLVRDWLDAGKDRLAQLQDGDVVVLENVRFNTGESKDDEALSKKMAALCDVFVMDAFGTAHRAQASTHGVGKFAPVACAGPLLVNELDALGKALQNPRRPLVAIVAGSKVSTKLTILKSLADKVDQLVVGGGIANTFILAAGHSVGKSLCEADLVPDAQAIIAAARAKGGDVPLPSDVVVAKAFSETAPARTCRVDDIAADDMVLDIGPDTAKTLGDILRKAGTIVWNGPVGVFEFDAFAGGTEAIARAVAESSAFSIAGGGDTIAAINKFHIEDKVSYISTGGGAFLEFLEGKTLPAVAMLEERARGTHT.

Substrate-binding positions include 21–23, R37, 60–63, R119, and R152; these read DLN and HLGR. Residues K203, E325, and 351–354 contribute to the ATP site; that span reads GGDT.

The protein belongs to the phosphoglycerate kinase family. Monomer.

It localises to the cytoplasm. The enzyme catalyses (2R)-3-phosphoglycerate + ATP = (2R)-3-phospho-glyceroyl phosphate + ADP. Its pathway is carbohydrate degradation; glycolysis; pyruvate from D-glyceraldehyde 3-phosphate: step 2/5. This Acidithiobacillus ferrooxidans (strain ATCC 23270 / DSM 14882 / CIP 104768 / NCIMB 8455) (Ferrobacillus ferrooxidans (strain ATCC 23270)) protein is Phosphoglycerate kinase.